A 409-amino-acid polypeptide reads, in one-letter code: Phospho-N-acetylmuramoyl-pentapeptide-transferase (409 aa).

Transmembrane regions (helical) follow at residues 23 to 43, 73 to 93, 95 to 115, 132 to 152, 214 to 234, 247 to 267, 279 to 299, 305 to 325, 331 to 351, and 386 to 406; these read YITF…TIFG, TPTM…LLLA, LNNI…AIGF, GIFK…TLYF, YAWL…SNGA, TSAI…NVIF, SGEM…FLWY, AVFM…VLAI, MLIP…VLQV, and KIVT…IVTL.

The protein belongs to the glycosyltransferase 4 family. MraY subfamily. Mg(2+) is required as a cofactor.

The protein localises to the cell inner membrane. The catalysed reaction is UDP-N-acetyl-alpha-D-muramoyl-L-alanyl-gamma-D-glutamyl-meso-2,6-diaminopimeloyl-D-alanyl-D-alanine + di-trans,octa-cis-undecaprenyl phosphate = di-trans,octa-cis-undecaprenyl diphospho-N-acetyl-alpha-D-muramoyl-L-alanyl-D-glutamyl-meso-2,6-diaminopimeloyl-D-alanyl-D-alanine + UMP. The protein operates within cell wall biogenesis; peptidoglycan biosynthesis. Catalyzes the initial step of the lipid cycle reactions in the biosynthesis of the cell wall peptidoglycan: transfers peptidoglycan precursor phospho-MurNAc-pentapeptide from UDP-MurNAc-pentapeptide onto the lipid carrier undecaprenyl phosphate, yielding undecaprenyl-pyrophosphoryl-MurNAc-pentapeptide, known as lipid I. This Flavobacterium psychrophilum (strain ATCC 49511 / DSM 21280 / CIP 103535 / JIP02/86) protein is Phospho-N-acetylmuramoyl-pentapeptide-transferase.